Consider the following 150-residue polypeptide: MAGFIGKEQHSIDEKGRFMIPARFRKLLGDGKEARAKGAIFYVMKAFDGSLELYEPEIWAEKEKGLMSLSDFNPDERMLKTMMYERLDSVEMDRQGRIALPKDFLLHAAIVKDIVIIGANVKMILWSPEKLTSMIRESGTRFQVLAGRYF.

2 SpoVT-AbrB domains span residues 7–58 (KEQH…EPEI) and 87–130 (LDSV…SPEK).

Belongs to the MraZ family. In terms of assembly, forms oligomers.

The protein localises to the cytoplasm. It is found in the nucleoid. The polypeptide is Transcriptional regulator MraZ (Chlorobium phaeobacteroides (strain BS1)).